A 430-amino-acid chain; its full sequence is UDP-N-acetylglucosamine 1-carboxyvinyltransferase (430 aa).

Residue 22 to 23 participates in phosphoenolpyruvate binding; that stretch reads KN. Arg102 contributes to the UDP-N-acetyl-alpha-D-glucosamine binding site. The Proton donor role is filled by Cys126. Position 126 is a 2-(S-cysteinyl)pyruvic acid O-phosphothioketal (Cys126). UDP-N-acetyl-alpha-D-glucosamine contacts are provided by residues 131–135, 172–175, Asp317, and Ile339; these read RPVDL and KVSV.

The protein belongs to the EPSP synthase family. MurA subfamily.

The protein resides in the cytoplasm. It carries out the reaction phosphoenolpyruvate + UDP-N-acetyl-alpha-D-glucosamine = UDP-N-acetyl-3-O-(1-carboxyvinyl)-alpha-D-glucosamine + phosphate. Its pathway is cell wall biogenesis; peptidoglycan biosynthesis. In terms of biological role, cell wall formation. Adds enolpyruvyl to UDP-N-acetylglucosamine. This is UDP-N-acetylglucosamine 1-carboxyvinyltransferase from Agrobacterium fabrum (strain C58 / ATCC 33970) (Agrobacterium tumefaciens (strain C58)).